Reading from the N-terminus, the 262-residue chain is Hydroxyethylthiazole kinase (262 aa).

Methionine 50 provides a ligand contact to substrate. Residues arginine 125 and threonine 171 each coordinate ATP. Glycine 198 lines the substrate pocket.

The protein belongs to the Thz kinase family. The cofactor is Mg(2+).

The enzyme catalyses 5-(2-hydroxyethyl)-4-methylthiazole + ATP = 4-methyl-5-(2-phosphooxyethyl)-thiazole + ADP + H(+). The protein operates within cofactor biosynthesis; thiamine diphosphate biosynthesis; 4-methyl-5-(2-phosphoethyl)-thiazole from 5-(2-hydroxyethyl)-4-methylthiazole: step 1/1. Its function is as follows. Catalyzes the phosphorylation of the hydroxyl group of 4-methyl-5-beta-hydroxyethylthiazole (THZ). The sequence is that of Hydroxyethylthiazole kinase from Escherichia coli (strain K12 / MC4100 / BW2952).